A 269-amino-acid polypeptide reads, in one-letter code: Ribonuclease HII (269 aa).

The RNase H type-2 domain occupies 83–269; it reads YLIAGVDEVG…HRMSFLTNIL (187 aa). Positions 89, 90, and 185 each coordinate a divalent metal cation.

This sequence belongs to the RNase HII family. Requires Mn(2+) as cofactor. The cofactor is Mg(2+).

The protein resides in the cytoplasm. The enzyme catalyses Endonucleolytic cleavage to 5'-phosphomonoester.. Its function is as follows. Endonuclease that specifically degrades the RNA of RNA-DNA hybrids. The protein is Ribonuclease HII of Clostridium botulinum (strain Hall / ATCC 3502 / NCTC 13319 / Type A).